A 492-amino-acid polypeptide reads, in one-letter code: Octanoyltransferase (492 aa).

The segment at 1–255 is unknown; the sequence is MRCILLGSGT…GYDGLEAIID (255 aa). The interval 256–492 is lipB domain; it reads EKGIRIKDFE…AVFRRNFGAL (237 aa). The 188-residue stretch at 305–492 folds into the BPL/LPL catalytic domain; that stretch reads RKPQNTLLFC…AVFRRNFGAL (188 aa). Substrate contacts are provided by residues 350 to 357, 423 to 425, and 436 to 438; these read RGGDITYH, AIG, and GFA. Catalysis depends on Cys-454, which acts as the Acyl-thioester intermediate.

In the C-terminal section; belongs to the LipB family.

It localises to the cytoplasm. The catalysed reaction is octanoyl-[ACP] + L-lysyl-[protein] = N(6)-octanoyl-L-lysyl-[protein] + holo-[ACP] + H(+). Its pathway is protein modification; protein lipoylation via endogenous pathway; protein N(6)-(lipoyl)lysine from octanoyl-[acyl-carrier-protein]: step 1/2. Catalyzes the transfer of endogenously produced octanoic acid from octanoyl-acyl-carrier-protein onto the lipoyl domains of lipoate-dependent enzymes. Lipoyl-ACP can also act as a substrate although octanoyl-ACP is likely to be the physiological substrate. In Porphyromonas gingivalis (strain ATCC BAA-308 / W83), this protein is Octanoyltransferase.